A 495-amino-acid chain; its full sequence is Glycerol kinase (495 aa).

Residue threonine 12 participates in ADP binding. Positions 12, 13, and 14 each coordinate ATP. Residue threonine 12 coordinates sn-glycerol 3-phosphate. Arginine 16 contributes to the ADP binding site. Sn-glycerol 3-phosphate contacts are provided by arginine 82, glutamate 83, tyrosine 134, and aspartate 243. Residues arginine 82, glutamate 83, tyrosine 134, aspartate 243, and glutamine 244 each coordinate glycerol. Positions 265 and 308 each coordinate ADP. Residues threonine 265, glycine 308, glutamine 312, and glycine 409 each coordinate ATP. Residues glycine 409 and asparagine 413 each coordinate ADP.

The protein belongs to the FGGY kinase family.

The enzyme catalyses glycerol + ATP = sn-glycerol 3-phosphate + ADP + H(+). Its pathway is polyol metabolism; glycerol degradation via glycerol kinase pathway; sn-glycerol 3-phosphate from glycerol: step 1/1. Inhibited by fructose 1,6-bisphosphate (FBP). Functionally, key enzyme in the regulation of glycerol uptake and metabolism. Catalyzes the phosphorylation of glycerol to yield sn-glycerol 3-phosphate. This Ectopseudomonas mendocina (strain ymp) (Pseudomonas mendocina) protein is Glycerol kinase.